A 132-amino-acid polypeptide reads, in one-letter code: Small ribosomal subunit protein uS8 (132 aa).

This sequence belongs to the universal ribosomal protein uS8 family. Part of the 30S ribosomal subunit. Contacts proteins S5 and S12.

In terms of biological role, one of the primary rRNA binding proteins, it binds directly to 16S rRNA central domain where it helps coordinate assembly of the platform of the 30S subunit. In Staphylococcus epidermidis (strain ATCC 35984 / DSM 28319 / BCRC 17069 / CCUG 31568 / BM 3577 / RP62A), this protein is Small ribosomal subunit protein uS8.